A 342-amino-acid polypeptide reads, in one-letter code: Mitochondrial sorting homolog (342 aa).

Residues 1–6 lie on the Mitochondrial intermembrane side of the membrane; that stretch reads MTDRNE. Residues 7–25 traverse the membrane as a helical segment; sequence LIGVAIRVVAAAAVSFLSV. At 26–342 the chain is on the cytoplasmic side; it reads RYLVKYLDPN…AHLLVEETLD (317 aa). Position 124–131 (124–131) interacts with ATP; the sequence is GPPGCGKT.

Belongs to the AAA ATPase family.

The protein resides in the mitochondrion outer membrane. Functionally, involved in intramitochondrial sorting of proteins. In Caenorhabditis elegans, this protein is Mitochondrial sorting homolog (mspn-1).